A 158-amino-acid polypeptide reads, in one-letter code: NAD(P)H-quinone oxidoreductase subunit N (158 aa).

The protein belongs to the complex I NdhN subunit family. In terms of assembly, NDH-1 can be composed of about 15 different subunits; different subcomplexes with different compositions have been identified which probably have different functions.

It is found in the cellular thylakoid membrane. The catalysed reaction is a plastoquinone + NADH + (n+1) H(+)(in) = a plastoquinol + NAD(+) + n H(+)(out). It catalyses the reaction a plastoquinone + NADPH + (n+1) H(+)(in) = a plastoquinol + NADP(+) + n H(+)(out). NDH-1 shuttles electrons from an unknown electron donor, via FMN and iron-sulfur (Fe-S) centers, to quinones in the respiratory and/or the photosynthetic chain. The immediate electron acceptor for the enzyme in this species is believed to be plastoquinone. Couples the redox reaction to proton translocation, and thus conserves the redox energy in a proton gradient. Cyanobacterial NDH-1 also plays a role in inorganic carbon-concentration. This chain is NAD(P)H-quinone oxidoreductase subunit N, found in Prochlorococcus marinus (strain MIT 9301).